Consider the following 984-residue polypeptide: PAX-interacting protein 1 (984 aa).

BRCT domains are found at residues 8-93 and 94-183; these read VPEE…GFSP and ESCQ…LYHP. Residues 94–183 form an interaction with PAGR1 region; that stretch reads ESCQIFFGIT…TRKDEALYHP (90 aa). 2 disordered regions span residues 187 to 271 and 417 to 509; these read VYEE…PAEV and QQHL…LFGH. The segment covering 188 to 208 has biased composition (acidic residues); it reads YEEEEEEEEEEEGAGNEEPDS. The segment covering 217-229 has biased composition (low complexity); that stretch reads KSSPASSQEGSPS. A phosphoserine mark is found at Ser227 and Ser235. Over residues 424-454 the composition is skewed to pro residues; the sequence is PYPPPPPHPFPPPPAHPHQFPQPPLQRPQPP. Low complexity predominate over residues 455-485; it reads LQQQQLSHLQQQQLQHLQRLQQMQPTPTAQL. Over residues 486–499 the composition is skewed to pro residues; sequence PGPPAQALQPPPPQ. Positions 505–984 are interaction with TP53BP1; sequence PLFGHDPAVE…TLDYESYKFN (480 aa). 2 BRCT domains span residues 516 to 609 and 616 to 704; these read PEEG…RALH and PGGK…TQYG. The Nuclear localization signal signature appears at 583–600; the sequence is RKRCITAHWLNTVLKKKK. The disordered stretch occupies residues 750-771; that stretch reads KQNEVTNVQPSSKRARIEDIPP. The span at 752–761 shows a compositional bias: polar residues; sequence NEVTNVQPSS. 2 BRCT domains span residues 781–862 and 883–924; these read TPFV…NYLL and HASP…QPSF.

As to quaternary structure, interacts with the C-terminal transactivation domain of PAX2. Forms a constitutive complex with PAGR1 independently of the MLL2/MLL3 complex. Interacts with TP53BP1 (when phosphorylated at the N-terminus by ATM). Interacts with HLTF. Component of the KMT2 family MLL2/MLL3 complex (also named ASCOM complex), at least composed of the HMTs KMT2D and/or KMT2C, the common subunits ASH2L, RBBP5, WDR5 and DPY30, and the complex type-specific subunits PAXIP1/PTIP, PAGR1, NCOA6 and KDM6A; required for the association of PAGR1 with the MLL2/MLL3 complex. Interacts with NUPR1; this interaction prevents PAXIP1 inhibition of PAX2 transcription factor activity.

It localises to the nucleus matrix. The protein resides in the chromosome. In terms of biological role, involved in DNA damage response and in transcriptional regulation through histone methyltransferase (HMT) complexes. Plays a role in early development. In DNA damage response is required for cell survival after ionizing radiation. In vitro shown to be involved in the homologous recombination mechanism for the repair of double-strand breaks (DSBs). Its localization to DNA damage foci requires RNF8 and UBE2N. Recruits TP53BP1 to DNA damage foci and, at least in particular repair processes, effective DNA damage response appears to require the association with TP53BP1 phosphorylated by ATM at 'Ser-25'. Together with TP53BP1 regulates ATM association. Proposed to recruit PAGR1 to sites of DNA damage and the PAGR1:PAXIP1 complex is required for cell survival in response to DNA damage; the function is probably independent of MLL-containing histone methyltransferase (HMT) complexes. However, this function has been questioned. Promotes ubiquitination of PCNA following UV irradiation and may regulate recruitment of polymerase eta and RAD51 to chromatin after DNA damage. Proposed to be involved in transcriptional regulation by linking MLL-containing histone methyltransferase (HMT) complexes to gene promoters by interacting with promoter-bound transcription factors such as PAX2. Associates with gene promoters that are known to be regulated by KMT2D/MLL2. During immunoglobulin class switching in activated B-cells is involved in trimethylation of histone H3 at 'Lys-4' and in transcription initiation of downstream switch regions at the immunoglobulin heavy-chain (Igh) locus; this function appears to involve the recruitment of MLL-containing HMT complexes. Conflictingly, its function in transcriptional regulation during immunoglobulin class switching is reported to be independent of the MLL2/MLL3 complex. This chain is PAX-interacting protein 1 (PAXIP1), found in Bos taurus (Bovine).